We begin with the raw amino-acid sequence, 296 residues long: 4-diphosphocytidyl-2-C-methyl-D-erythritol kinase (296 aa).

The active site involves Lys13. 98-108 (PVAAGIGGGSA) is a binding site for ATP. Asp140 is a catalytic residue.

Belongs to the GHMP kinase family. IspE subfamily.

The catalysed reaction is 4-CDP-2-C-methyl-D-erythritol + ATP = 4-CDP-2-C-methyl-D-erythritol 2-phosphate + ADP + H(+). The protein operates within isoprenoid biosynthesis; isopentenyl diphosphate biosynthesis via DXP pathway; isopentenyl diphosphate from 1-deoxy-D-xylulose 5-phosphate: step 3/6. Catalyzes the phosphorylation of the position 2 hydroxy group of 4-diphosphocytidyl-2C-methyl-D-erythritol. This Rhodopseudomonas palustris (strain HaA2) protein is 4-diphosphocytidyl-2-C-methyl-D-erythritol kinase.